Reading from the N-terminus, the 138-residue chain is Basic phospholipase A2 B (138 aa).

Residues 1 to 16 (MRALWIVAVLLLGVEG) form the signal peptide. Cystine bridges form between C42/C131, C44/C60, C59/C111, C65/C138, C66/C104, C73/C97, and C91/C102. 3 residues coordinate Ca(2+): Y43, G45, and G47. H63 is a catalytic residue. D64 contributes to the Ca(2+) binding site. The active site involves D105.

This sequence belongs to the phospholipase A2 family. Group II subfamily. D49 sub-subfamily. Requires Ca(2+) as cofactor. Expressed by the venom gland.

The protein localises to the secreted. The catalysed reaction is a 1,2-diacyl-sn-glycero-3-phosphocholine + H2O = a 1-acyl-sn-glycero-3-phosphocholine + a fatty acid + H(+). Snake venom phospholipase A2 (PLA2) that shows potent hemolytic activity, and exhibits medium anticoagulant effects by binding to factor Xa (F10) and inhibiting the prothrombinase activity (IC(50) is 90 nM). It is one of the few phospholipases A2 capable of hydrolyzing the phospholipids of E.coli membranes in the presence of a bactericidal/permeability-increasing protein (BPI) of neutrophils. PLA2 catalyzes the calcium-dependent hydrolysis of the 2-acyl groups in 3-sn-phosphoglycerides. The chain is Basic phospholipase A2 B from Gloydius halys (Chinese water mocassin).